A 628-amino-acid chain; its full sequence is MVAFSALSGVSALSLLLCLVQHAHGVSLKVSTQGGNSSSPILYGFMFEDINHSGDGGIYGQLLQNPGLQGTTPNLTAWAAVGDATIAIDGDSPLTSAIPSTIKLDVADDATGAVGLTNEGYWGIPVDGSEFQSSFWIKGDYSGDITVRLVGNYTGTEYGSATITHTSTADNFTQASVKFPTTKAPDGNVLYELTVDGSVAAGSSLNFGYLTLFGETYKSRENGLKPQLANVLADMKGSFLRFPGGNNLEGNSAENRWKWNETIGDLWDRPGREGTWTYYNTDGLGLHEYFYWCEDLGLVPVLGVWDGFALESGGNTPITGDALTPYIDDVLNELEYILGDTSTTYGAWRAANGQEEPWNLTMVEIGNEDMLGGGCESYAERFTAFYDAIHAAYPDLILIASTSEADCLPESMPEGSWVDYHDYSTPDGLVGQFNYFDNLDRSVPYFIGEYSRWEIDWPNMKGSVSEAVFMIGFERNSDVVKMAAYAPLLQLVNSTQWTPDLIGYTQSPDDIFLSTSYYVQEMFSRNRGDTIKEVTSDSDFGPLYWVASSAGDSYYVKLANYGSETQDLTVSIPGTSTGKLTVLADNDPDAYNSDTQTLVTPSESTVQASNGTFTFSLPAWAVAVLAAN.

An N-terminal signal peptide occupies residues Met-1–Gly-25. 8 N-linked (GlcNAc...) asparagine glycosylation sites follow: Asn-36, Asn-51, Asn-74, Asn-152, Asn-171, Asn-260, Asn-359, and Asn-493.

This sequence belongs to the glycosyl hydrolase 51 family.

The protein localises to the secreted. It catalyses the reaction Hydrolysis of terminal non-reducing alpha-L-arabinofuranoside residues in alpha-L-arabinosides.. Its pathway is glycan metabolism; L-arabinan degradation. Alpha-L-arabinofuranosidase involved in the degradation of arabinoxylan, a major component of plant hemicellulose. Acts only on small linear 1,5-alpha-linked L-arabinofuranosyl oligosaccharides. This chain is Alpha-L-arabinofuranosidase A (abfA), found in Aspergillus kawachii (strain NBRC 4308) (White koji mold).